Here is a 220-residue protein sequence, read N- to C-terminus: Mediator of RNA polymerase II transcription subunit 19 (220 aa).

Positions 171-220 are disordered; the sequence is AFDLDGTGKSQSGSNSGNNSKKRKNKSSGSSMATPTHSDSHEDMKRRRLE. The span at 178–189 shows a compositional bias: low complexity; sequence GKSQSGSNSGNN. Basic and acidic residues predominate over residues 208-220; it reads SDSHEDMKRRRLE.

This sequence belongs to the Mediator complex subunit 19 family. Component of the Mediator complex, which is composed of at least 21 subunits that form three structurally distinct submodules. The Mediator head module contains MED6, MED8, MED11, SRB4/MED17, SRB5/MED18, ROX3/MED19, SRB2/MED20 and SRB6/MED22, the middle module contains MED1, MED4, NUT1/MED5, MED7, CSE2/MED9, NUT2/MED10, SRB7/MED21 and SOH1/MED31, and the tail module contains MED2, PGD1/MED3, RGR1/MED14, GAL11/MED15 and SIN4/MED16. The head and the middle modules interact directly with RNA polymerase II, whereas the elongated tail module interacts with gene-specific regulatory proteins.

The protein localises to the nucleus. Functionally, component of the Mediator complex, a coactivator involved in the regulated transcription of nearly all RNA polymerase II-dependent genes. Mediator functions as a bridge to convey information from gene-specific regulatory proteins to the basal RNA polymerase II transcription machinery. The Mediator complex, having a compact conformation in its free form, is recruited to promoters by direct interactions with regulatory proteins and serves for the assembly of a functional preinitiation complex with RNA polymerase II and the general transcription factors. The Mediator complex unfolds to an extended conformation and partially surrounds RNA polymerase II, specifically interacting with the unphosphorylated form of the C-terminal domain (CTD) of RNA polymerase II. The Mediator complex dissociates from the RNA polymerase II holoenzyme and stays at the promoter when transcriptional elongation begins. This chain is Mediator of RNA polymerase II transcription subunit 19 (ROX3), found in Saccharomyces cerevisiae (strain ATCC 204508 / S288c) (Baker's yeast).